A 377-amino-acid polypeptide reads, in one-letter code: Guanine nucleotide-binding protein subunit beta (377 aa).

7 WD repeats span residues 63 to 93 (GHTG…IVWN), 105 to 135 (LPCA…SIFN), 154 to 185 (GHKG…VLWD), 202 to 233 (GHTA…RLWD), 246 to 276 (GHES…RLFD), 293 to 323 (GDIP…YVWD), and 339 to 369 (SHEG…KIWA).

The protein belongs to the WD repeat G protein beta family. As to quaternary structure, g proteins are composed of 3 units, alpha, beta and gamma.

Functionally, guanine nucleotide-binding proteins (G proteins) are involved as a modulator or transducer in various transmembrane signaling systems. The beta and gamma chains are required for the GTPase activity, for replacement of GDP by GTP, and for G protein-effector interaction. This Solanum tuberosum (Potato) protein is Guanine nucleotide-binding protein subunit beta (GB1).